The chain runs to 88 residues: Small ribosomal subunit protein uS17 (88 aa).

Belongs to the universal ribosomal protein uS17 family. As to quaternary structure, part of the 30S ribosomal subunit.

Functionally, one of the primary rRNA binding proteins, it binds specifically to the 5'-end of 16S ribosomal RNA. This chain is Small ribosomal subunit protein uS17, found in Prochlorococcus marinus (strain SARG / CCMP1375 / SS120).